A 109-amino-acid chain; its full sequence is Ycf20-like protein (109 aa).

It belongs to the ycf20 family.

This is Ycf20-like protein from Synechocystis sp. (strain ATCC 27184 / PCC 6803 / Kazusa).